The primary structure comprises 252 residues: Probable 6-phosphogluconolactonase 5 (252 aa).

It belongs to the glucosamine/galactosamine-6-phosphate isomerase family. 6-phosphogluconolactonase subfamily.

Its subcellular location is the cytoplasm. The protein localises to the cytosol. It carries out the reaction 6-phospho-D-glucono-1,5-lactone + H2O = 6-phospho-D-gluconate + H(+). It functions in the pathway carbohydrate degradation; pentose phosphate pathway; D-ribulose 5-phosphate from D-glucose 6-phosphate (oxidative stage): step 2/3. In terms of biological role, catalyzes the hydrolysis of 6-phosphogluconolactone to 6-phosphogluconate. This Arabidopsis thaliana (Mouse-ear cress) protein is Probable 6-phosphogluconolactonase 5.